Consider the following 60-residue polypeptide: Potassium channel toxin alpha-KTx 12.5 (60 aa).

Residues 1-22 (MNKLPILIFMLLVCSMFISSDC) form the signal peptide. 3 cysteine pairs are disulfide-bonded: Cys30–Cys51, Cys36–Cys56, and Cys40–Cys58.

Belongs to the short scorpion toxin superfamily. Potassium channel inhibitor family. Alpha-KTx 12 subfamily. In terms of tissue distribution, expressed by the venom gland.

It localises to the secreted. Functionally, this recombinant toxin inhibits the mammalian voltage-gated potassium channels Kv1.3/KCNA3 (IC(50)=28 nM). Kv1.1/KCNA1 and Kv1.2/KCNA2 potassium channels are also weakly inhibited (IC(50)=1.73 uM and IC(50)=12.63 uM, respectively). The sequence is that of Potassium channel toxin alpha-KTx 12.5 from Lychas mucronatus (Chinese swimming scorpion).